The chain runs to 232 residues: Ribonuclease 3 (232 aa).

An RNase III domain is found at 5–134 (QTVLKNHFAI…FLGALLLDKD (130 aa)). Position 47 (glutamate 47) interacts with Mg(2+). Aspartate 51 is a catalytic residue. Mg(2+)-binding residues include aspartate 120 and glutamate 123. Glutamate 123 is an active-site residue. Positions 160-229 (DYKTHLQELL…AKNAVEKGLD (70 aa)) constitute a DRBM domain.

The protein belongs to the ribonuclease III family. Homodimer. It depends on Mg(2+) as a cofactor.

It localises to the cytoplasm. It carries out the reaction Endonucleolytic cleavage to 5'-phosphomonoester.. In terms of biological role, digests double-stranded RNA. Involved in the processing of primary rRNA transcript to yield the immediate precursors to the large and small rRNAs (23S and 16S). Processes some mRNAs, and tRNAs when they are encoded in the rRNA operon. Processes pre-crRNA and tracrRNA of type II CRISPR loci if present in the organism. This is Ribonuclease 3 from Streptococcus pneumoniae (strain CGSP14).